The primary structure comprises 101 residues: NAD(P)H-quinone oxidoreductase subunit 4L, chloroplastic (101 aa).

A run of 3 helical transmembrane segments spans residues Ile2–Ile22, Met32–Phe52, and Ile61–Val81.

Belongs to the complex I subunit 4L family. As to quaternary structure, NDH is composed of at least 16 different subunits, 5 of which are encoded in the nucleus.

Its subcellular location is the plastid. The protein resides in the chloroplast thylakoid membrane. It catalyses the reaction a plastoquinone + NADH + (n+1) H(+)(in) = a plastoquinol + NAD(+) + n H(+)(out). It carries out the reaction a plastoquinone + NADPH + (n+1) H(+)(in) = a plastoquinol + NADP(+) + n H(+)(out). NDH shuttles electrons from NAD(P)H:plastoquinone, via FMN and iron-sulfur (Fe-S) centers, to quinones in the photosynthetic chain and possibly in a chloroplast respiratory chain. The immediate electron acceptor for the enzyme in this species is believed to be plastoquinone. Couples the redox reaction to proton translocation, and thus conserves the redox energy in a proton gradient. This chain is NAD(P)H-quinone oxidoreductase subunit 4L, chloroplastic, found in Arabidopsis thaliana (Mouse-ear cress).